A 273-amino-acid polypeptide reads, in one-letter code: 3-keto-5-aminohexanoate cleavage enzyme (273 aa).

Glu14 lines the (5S)-5-amino-3-oxohexanoate pocket. Residues His46 and His48 each coordinate Zn(2+). Residues Ser82, Gly85, and Ser106 each coordinate (5S)-5-amino-3-oxohexanoate. Residue Glu227 participates in Zn(2+) binding.

The protein belongs to the BKACE family. Kce subfamily. Homotetramer. Requires Zn(2+) as cofactor.

It catalyses the reaction (5S)-5-amino-3-oxohexanoate + acetyl-CoA = (3S)-3-aminobutanoyl-CoA + acetoacetate. It functions in the pathway amino-acid degradation; L-lysine degradation via acetate pathway. Involved in the anaerobic fermentation of lysine. Catalyzes the reversible reaction between 3-keto-5-aminohexanoate (KAH) and acetyl-CoA to form 3-aminobutyryl-CoA and acetoacetate. The reaction involves the deprotonation of KAH, the nucleophilic addition onto acetyl-CoA and the intramolecular transfer of the CoA moiety. This chain is 3-keto-5-aminohexanoate cleavage enzyme, found in Acetoanaerobium sticklandii (strain ATCC 12662 / DSM 519 / JCM 1433 / CCUG 9281 / NCIMB 10654 / HF) (Clostridium sticklandii).